The sequence spans 517 residues: Crotonobetaine/carnitine--CoA ligase (517 aa).

The protein belongs to the ATP-dependent AMP-binding enzyme family.

It carries out the reaction 4-(trimethylamino)butanoate + ATP + CoA = 4-(trimethylamino)butanoyl-CoA + AMP + diphosphate. The catalysed reaction is crotonobetaine + ATP + CoA = crotonobetainyl-CoA + AMP + diphosphate. The enzyme catalyses (R)-carnitine + ATP + CoA = (R)-carnitinyl-CoA + AMP + diphosphate. Its pathway is amine and polyamine metabolism; carnitine metabolism. In terms of biological role, catalyzes the transfer of CoA to carnitine, generating the initial carnitinyl-CoA needed for the CaiB reaction cycle. Also has activity toward crotonobetaine and gamma-butyrobetaine. This chain is Crotonobetaine/carnitine--CoA ligase, found in Salmonella enteritidis PT4 (strain P125109).